The primary structure comprises 138 residues: Isochorismatase-like protein asqB (138 aa).

It belongs to the isochorismatase family.

The catalysed reaction is [(1'E)-5'-(3',3'-dimethyloxiran-2'-yl)-3'-hydroxy-3'-methylpent-1'-en-1'-yl]-quinolinone B = yaequinolone C. It participates in secondary metabolite biosynthesis. The protein operates within alkaloid biosynthesis. Its pathway is mycotoxin biosynthesis. Functionally, isochorismatase-like protein; part of the gene cluster that mediates the biosynthesis of the aspoquinolone mycotoxins. Within the pathway, asqB converts [(1'E)-5'-(3',3'-dimethyloxiran-2'-yl)-3'-hydroxy-3'-methylpent-1'-en-1'-yl]-quinolinone B into yaequinolone C. The first step of the pathway is catalyzed by the nonribosomal peptide synthetase asqK that condenses anthranilic acid and O-methyl-L-tyrosine to produce 4'-methoxycyclopeptin. 4'-methoxycyclopeptin is then converted to 4'-methoxydehydrocyclopeptin by the ketoglutarate-dependent dioxygenase asqJ. AsqJ also converts its first product 4'-methoxydehydrocyclopeptin to 4'-methoxycyclopenin. The following conversion of 4'-methoxycyclopenin into 4'-methoxyviridicatin is catalyzed by the cyclopenase asqI. 4'-methoxyviridicatin is the precursor of quinolone natural products, and is further converted to quinolinone B. The prenyltransferase asqH1 then catalyzes the canonical Friedel-Crafts alkylation of quinolinone B with dimethylallyl cation to yield dimethylallyl quinolone, which is subjected to FAD-dependent dehydrogenation by the FAD-linked oxidoreductase asqF to yield conjugated aryl diene. The delta(3') double bond then serves as the site of the second alkylation with DMAPP catalyzed by the prenyltransferase asqH2 to yield a carbenium ion intermediate, which can be attacked by H(2)O to yield a styrenyl quinolone containing a C3'-hydroxyprenyl chain. The FAD-dependent monooxygenase asqG performs epoxidation of the terminal C7'-C8' olefin. Finally, after dehydratation of the epoxide at C3 by asqC, the quinolone epoxide rearrangement protein asqO catalyzes an enzymatic 3-exo-tet cyclization to yield the cyclopropyl-THF ring system in aspoquinolone. In Emericella nidulans (strain FGSC A4 / ATCC 38163 / CBS 112.46 / NRRL 194 / M139) (Aspergillus nidulans), this protein is Isochorismatase-like protein asqB.